The following is a 519-amino-acid chain: Threonine synthase, chloroplastic (519 aa).

A chloroplast-targeting transit peptide spans 1-40 (MAASCMLRSSFISPGLPQLHHQSTSKPNNGIHFFTPIKAT). Lysine 196 bears the N6-(pyridoxal phosphate)lysine mark. Pyridoxal 5'-phosphate is bound by residues 328–332 (GNLGN) and threonine 465.

This sequence belongs to the threonine synthase family. As to quaternary structure, homodimer. It depends on pyridoxal 5'-phosphate as a cofactor.

The protein resides in the plastid. The protein localises to the chloroplast. The catalysed reaction is O-phospho-L-homoserine + H2O = L-threonine + phosphate. The protein operates within amino-acid biosynthesis; L-threonine biosynthesis; L-threonine from L-aspartate: step 5/5. Its activity is regulated as follows. Allosterically activated by S-adenosyl-methionine (SAM). Catalyzes the gamma-elimination of phosphate from L-phosphohomoserine and the beta-addition of water to produce L-threonine. This chain is Threonine synthase, chloroplastic, found in Solanum tuberosum (Potato).